Here is a 72-residue protein sequence, read N- to C-terminus: UPF0270 protein PM1156 (72 aa).

The protein belongs to the UPF0270 family.

The protein is UPF0270 protein PM1156 of Pasteurella multocida (strain Pm70).